The chain runs to 339 residues: Agamous-like MADS-box protein AGL86 (339 aa).

An MADS-box domain is found at 1-60; it reads MRSKIKLSLIANKTSRRTTFRKRKGGITNKLHELTTLCGVKACAVISSPYENPVVWPSTE. The stretch at 86-112 forms a coiled coil; sequence TYLQDKITKETKKLESLRRENRESQLR.

In terms of assembly, interacts with AGL61/DIANA and AGL62.

The protein resides in the nucleus. Probable transcription factor. This chain is Agamous-like MADS-box protein AGL86 (AGL86), found in Arabidopsis thaliana (Mouse-ear cress).